The primary structure comprises 429 residues: Gamma-glutamyl phosphate reductase (429 aa).

Belongs to the gamma-glutamyl phosphate reductase family.

The protein localises to the cytoplasm. The enzyme catalyses L-glutamate 5-semialdehyde + phosphate + NADP(+) = L-glutamyl 5-phosphate + NADPH + H(+). It functions in the pathway amino-acid biosynthesis; L-proline biosynthesis; L-glutamate 5-semialdehyde from L-glutamate: step 2/2. Catalyzes the NADPH-dependent reduction of L-glutamate 5-phosphate into L-glutamate 5-semialdehyde and phosphate. The product spontaneously undergoes cyclization to form 1-pyrroline-5-carboxylate. This is Gamma-glutamyl phosphate reductase from Methylibium petroleiphilum (strain ATCC BAA-1232 / LMG 22953 / PM1).